The chain runs to 291 residues: Nucleotide-binding protein MSMEG_3079/MSMEI_3001 (291 aa).

14 to 21 (GLSGAGRG) is an ATP binding site. GTP is bound at residue 65 to 68 (DVRS).

Belongs to the RapZ-like family.

Displays ATPase and GTPase activities. The sequence is that of Nucleotide-binding protein MSMEG_3079/MSMEI_3001 from Mycolicibacterium smegmatis (strain ATCC 700084 / mc(2)155) (Mycobacterium smegmatis).